The sequence spans 108 residues: Abscisic stress-ripening protein 3 (108 aa).

Disordered regions lie at residues 1–34 (MAEE…HHSH) and 84–108 (FAFH…GRHH). Basic and acidic residues predominate over residues 15-24 (NREEEGGPVD). The segment covering 25-34 (HKKKVKHHSH) has biased composition (basic residues). Residues 95-108 (AKKEKKAAEKGRHH) show a composition bias toward basic and acidic residues.

The protein belongs to the abscisic acid and water stress-induced protein family.

This Solanum lycopersicum (Tomato) protein is Abscisic stress-ripening protein 3.